The primary structure comprises 156 residues: MARRRRAQTRKIDADPVYGSVVISKFINKLMYDGKKSKAENIFYKAMDLVKEKTGKDGLEAFNEAIENIKPRVEVKSRRVGGSTYQVPVDVRPDRQNSLAFTWLIDASRKRGGRSMIERLSNEIVDAIDGKGQAVAKRDTVHRMAEGNKAFAHFRW.

It belongs to the universal ribosomal protein uS7 family. Part of the 30S ribosomal subunit. Contacts proteins S9 and S11.

Functionally, one of the primary rRNA binding proteins, it binds directly to 16S rRNA where it nucleates assembly of the head domain of the 30S subunit. Is located at the subunit interface close to the decoding center, probably blocks exit of the E-site tRNA. The chain is Small ribosomal subunit protein uS7 from Brachyspira hyodysenteriae (strain ATCC 49526 / WA1).